A 117-amino-acid chain; its full sequence is Large-conductance mechanosensitive channel (117 aa).

3 helical membrane passes run 7-27 (EFAL…GAAF), 30-50 (IVTA…FGTV), and 64-84 (GMFV…FIFV).

Belongs to the MscL family. In terms of assembly, homopentamer.

It is found in the cell membrane. In terms of biological role, channel that opens in response to stretch forces in the membrane lipid bilayer. May participate in the regulation of osmotic pressure changes within the cell. The polypeptide is Large-conductance mechanosensitive channel (Staphylococcus saprophyticus subsp. saprophyticus (strain ATCC 15305 / DSM 20229 / NCIMB 8711 / NCTC 7292 / S-41)).